Reading from the N-terminus, the 138-residue chain is Superoxide dismutase [Mn] (138 aa).

Mn(2+)-binding residues include His1, His49, Asp133, and His137.

The protein belongs to the iron/manganese superoxide dismutase family. The cofactor is Mn(2+).

The enzyme catalyses 2 superoxide + 2 H(+) = H2O2 + O2. Destroys superoxide anion radicals which are normally produced within the cells and which are toxic to biological systems. This is Superoxide dismutase [Mn] (sodA) from Mycobacterium celatum.